We begin with the raw amino-acid sequence, 64 residues long: Metallothionein-A (64 aa).

This sequence belongs to the metallothionein superfamily. Type 4 family.

Its function is as follows. Metallothioneins have a high content of cysteine residues that bind various heavy metals. The polypeptide is Metallothionein-A (MTA) (Strongylocentrotus purpuratus (Purple sea urchin)).